Here is a 154-residue protein sequence, read N- to C-terminus: Egg-lysin (154 aa).

The N-terminal stretch at 1–18 (MKLLVLCIFAMMATLAMS) is a signal peptide.

Monomer. Homodimer. Molecules associate into dimers and then rapidly dissociate again. Interacts (as a monomer) with the egg vitelline layer protein VERL (via VERL repeats); each VERL chain can bind multiple copies of lysin. In terms of tissue distribution, sperm (at protein level).

Its subcellular location is the cytoplasmic vesicle. It localises to the secretory vesicle. The protein localises to the acrosome lumen. Its function is as follows. Creates a 3 um hole in the egg vitelline layer through which the sperm passes. Does not have enzyme activity. Species-specific interaction between the sperm protein lysin and the egg protein VERL exposes a basic surface on lysin that may dissociate the egg vitelline layer via electrostatic repulsion. Plays a role in ensuring species-specific fertilization. The sequence is that of Egg-lysin from Haliotis rufescens (California red abalone).